The sequence spans 413 residues: Protein arginine N-methyltransferase 2 (413 aa).

Disordered stretches follow at residues 65–85 (DDEE…QKSV) and 148–178 (ELED…SAPQ). The segment covering 148-173 (ELEDDDEEEEEGQEEQTGTEEVEVEG) has biased composition (acidic residues). One can recognise an RMT2 domain in the interval 192-413 (TGPDVTNSRY…YRLPLCKYMD (222 aa)). S-adenosyl-L-methionine is bound by residues Tyr201, Met230, 250–255 (HGMGIV), 271–273 (EAH), 298–299 (WQ), and Asp318.

This sequence belongs to the class I-like SAM-binding methyltransferase superfamily. RMT2 methyltransferase family. As to quaternary structure, monomer.

Its subcellular location is the cytoplasm. It localises to the nucleus. S-adenosyl-L-methionine-dependent protein-arginine N-methyltransferase that methylates the delta-nitrogen atom of arginine residues to form N5-methylarginine (type IV) in target proteins. Monomethylates ribosomal protein L12. The polypeptide is Protein arginine N-methyltransferase 2 (Aspergillus oryzae (strain ATCC 42149 / RIB 40) (Yellow koji mold)).